The sequence spans 435 residues: 3-phosphoshikimate 1-carboxyvinyltransferase (435 aa).

Residues Lys-22, Ser-23, and Arg-27 each contribute to the 3-phosphoshikimate site. Lys-22 is a binding site for phosphoenolpyruvate. The phosphoenolpyruvate site is built by Gly-94 and Arg-122. 4 residues coordinate 3-phosphoshikimate: Ser-166, Gln-168, Asp-314, and Lys-341. Gln-168 is a binding site for phosphoenolpyruvate. Asp-314 acts as the Proton acceptor in catalysis. 2 residues coordinate phosphoenolpyruvate: Arg-345 and Arg-388.

This sequence belongs to the EPSP synthase family. Monomer.

The protein resides in the cytoplasm. The enzyme catalyses 3-phosphoshikimate + phosphoenolpyruvate = 5-O-(1-carboxyvinyl)-3-phosphoshikimate + phosphate. It functions in the pathway metabolic intermediate biosynthesis; chorismate biosynthesis; chorismate from D-erythrose 4-phosphate and phosphoenolpyruvate: step 6/7. Catalyzes the transfer of the enolpyruvyl moiety of phosphoenolpyruvate (PEP) to the 5-hydroxyl of shikimate-3-phosphate (S3P) to produce enolpyruvyl shikimate-3-phosphate and inorganic phosphate. This is 3-phosphoshikimate 1-carboxyvinyltransferase from Vesicomyosocius okutanii subsp. Calyptogena okutanii (strain HA).